Here is a 261-residue protein sequence, read N- to C-terminus: Glucosamine-6-phosphate deaminase (261 aa).

The active-site Proton acceptor; for enolization step is aspartate 67. Residue asparagine 135 is the For ring-opening step of the active site. Catalysis depends on histidine 137, which acts as the Proton acceptor; for ring-opening step. The active-site For ring-opening step is the glutamate 142.

It belongs to the glucosamine/galactosamine-6-phosphate isomerase family. NagB subfamily. Homohexamer.

It catalyses the reaction alpha-D-glucosamine 6-phosphate + H2O = beta-D-fructose 6-phosphate + NH4(+). It functions in the pathway amino-sugar metabolism; N-acetylneuraminate degradation; D-fructose 6-phosphate from N-acetylneuraminate: step 5/5. Catalyzes the reversible isomerization-deamination of glucosamine 6-phosphate (GlcN6P) to form fructose 6-phosphate (Fru6P) and ammonium ion. The protein is Glucosamine-6-phosphate deaminase of Hahella chejuensis (strain KCTC 2396).